Consider the following 93-residue polypeptide: Large ribosomal subunit protein uL23cz/uL23cy (93 aa).

It belongs to the universal ribosomal protein uL23 family. In terms of assembly, part of the 50S ribosomal subunit.

The protein localises to the plastid. Its subcellular location is the chloroplast. In terms of biological role, binds to 23S rRNA. In Cucumis sativus (Cucumber), this protein is Large ribosomal subunit protein uL23cz/uL23cy (rpl23-A).